The primary structure comprises 484 residues: ATP-dependent rRNA helicase RRP3 (484 aa).

Polar residues predominate over residues 1 to 10 (MAIVGSNSVS). A disordered region spans residues 1-61 (MAIVGSNSVS…SSQKSKNIVE (61 aa)). Basic and acidic residues predominate over residues 18 to 54 (RNDARDLAEKIKRNALKKQEQDKKQQLEEESKPESSQ). Residues 71–99 (STFSELKLVPELLEAIQQMKFSKPTPIQS) carry the Q motif motif. The region spanning 102-273 (IPHALEGKDI…RASLHNPVRV (172 aa)) is the Helicase ATP-binding domain. An ATP-binding site is contributed by 115-122 (AQTGSGKT). The DEAD box signature appears at 221–224 (DEAD). Positions 300–444 (YLIHLLNEFV…KDPSPPKAML (145 aa)) constitute a Helicase C-terminal domain. Positions 460–484 (RQTKEFHEKTRRGRRGKDDKDREEH) are disordered. Over residues 475 to 484 (GKDDKDREEH) the composition is skewed to basic and acidic residues.

The protein belongs to the DEAD box helicase family. DDX47/RRP3 subfamily. In terms of assembly, interacts with the SSU processome.

The protein localises to the nucleus. It carries out the reaction ATP + H2O = ADP + phosphate + H(+). ATP-dependent rRNA helicase required for pre-ribosomal RNA processing. Involved in the maturation of the 35S-pre-rRNA and to its cleavage to mature 18S rRNA. This chain is ATP-dependent rRNA helicase RRP3, found in Scheffersomyces stipitis (strain ATCC 58785 / CBS 6054 / NBRC 10063 / NRRL Y-11545) (Yeast).